Consider the following 316-residue polypeptide: Ornithine carbamoyltransferase (316 aa).

Carbamoyl phosphate is bound by residues 59-62 (STRT), Q86, R110, and 137-140 (HPCQ). L-ornithine is bound by residues N168, D232, and 236 to 237 (SM). Carbamoyl phosphate contacts are provided by residues 273-274 (CL) and R301.

The protein belongs to the aspartate/ornithine carbamoyltransferase superfamily. OTCase family.

Its subcellular location is the cytoplasm. It catalyses the reaction carbamoyl phosphate + L-ornithine = L-citrulline + phosphate + H(+). Its pathway is amino-acid biosynthesis; L-arginine biosynthesis; L-arginine from L-ornithine and carbamoyl phosphate: step 1/3. In terms of biological role, reversibly catalyzes the transfer of the carbamoyl group from carbamoyl phosphate (CP) to the N(epsilon) atom of ornithine (ORN) to produce L-citrulline. The protein is Ornithine carbamoyltransferase of Listeria monocytogenes serotype 4b (strain F2365).